Here is a 281-residue protein sequence, read N- to C-terminus: Digeranylgeranylglyceryl phosphate synthase (281 aa).

7 consecutive transmembrane segments (helical) span residues 14 to 34 (AMAA…LSSA), 38 to 58 (VSLS…VTGA), 95 to 115 (LFLF…CGII), 149 to 169 (FLFG…VLFL), 207 to 227 (ASYI…VPYL), 235 to 255 (YLFV…QILG), and 259 to 279 (AARS…SFIV).

Belongs to the UbiA prenyltransferase family. DGGGP synthase subfamily. Requires Mg(2+) as cofactor.

The protein localises to the cell membrane. It catalyses the reaction sn-3-O-(geranylgeranyl)glycerol 1-phosphate + (2E,6E,10E)-geranylgeranyl diphosphate = 2,3-bis-O-(geranylgeranyl)-sn-glycerol 1-phosphate + diphosphate. The protein operates within membrane lipid metabolism; glycerophospholipid metabolism. In terms of biological role, prenyltransferase that catalyzes the transfer of the geranylgeranyl moiety of geranylgeranyl diphosphate (GGPP) to the C2 hydroxyl of (S)-3-O-geranylgeranylglyceryl phosphate (GGGP). This reaction is the second ether-bond-formation step in the biosynthesis of archaeal membrane lipids. This Methanococcoides burtonii (strain DSM 6242 / NBRC 107633 / OCM 468 / ACE-M) protein is Digeranylgeranylglyceryl phosphate synthase.